The primary structure comprises 72 residues: Omega-conotoxin-like S6.6 (72 aa).

A signal peptide spans 1–22 (MKLTCVVIVAVLLLTACQLLTA). A propeptide spanning residues 23-45 (DDSRGTQKHRALRSDTKLSMSTR) is cleaved from the precursor. 3 disulfides stabilise this stretch: C46/C61, C53/C65, and C60/C71. C71 is modified (cysteine amide).

It belongs to the conotoxin O1 superfamily. In terms of tissue distribution, expressed by the venom duct.

It localises to the secreted. Functionally, omega-conotoxins act at presynaptic membranes, they bind and block voltage-gated calcium channels (Cav). This toxin blocks N-, P- and Q-type calcium channels. The protein is Omega-conotoxin-like S6.6 of Conus striatus (Striated cone).